A 488-amino-acid polypeptide reads, in one-letter code: V-type proton ATPase subunit B 1 (488 aa).

The protein belongs to the ATPase alpha/beta chains family. As to quaternary structure, V-ATPase is a heteromultimeric enzyme composed of a peripheral catalytic V1 complex (main components: subunits A, B, C, D, E, and F) attached to an integral membrane V0 proton pore complex (main component: the proteolipid protein).

Non-catalytic subunit of the peripheral V1 complex of vacuolar ATPase. V-ATPase is responsible for acidifying a variety of intracellular compartments in eukaryotic cells. The polypeptide is V-type proton ATPase subunit B 1 (Hordeum vulgare (Barley)).